Consider the following 78-residue polypeptide: Acyl carrier protein (78 aa).

The region spanning 2–77 (STIEERVKKI…AAIDYVNAHQ (76 aa)) is the Carrier domain. Position 37 is an O-(pantetheine 4'-phosphoryl)serine (Ser37).

This sequence belongs to the acyl carrier protein (ACP) family. In terms of processing, 4'-phosphopantetheine is transferred from CoA to a specific serine of apo-ACP by AcpS. This modification is essential for activity because fatty acids are bound in thioester linkage to the sulfhydryl of the prosthetic group.

Its subcellular location is the cytoplasm. Its pathway is lipid metabolism; fatty acid biosynthesis. Carrier of the growing fatty acid chain in fatty acid biosynthesis. This is Acyl carrier protein from Pseudomonas entomophila (strain L48).